The sequence spans 711 residues: MAVYRLCVTTGSYLKAGTLDNIYATLVGTCGESPKQKLDRVGRDFASGSVQKYKVRCEAELGEILLLRLHKERFAFFCKDPWYCSRICVTAPDGSAVHFPCYQWIDGYCTVELRPGTARTICQDSLPLLLDHRKRELQARQECYRWKIFAPGFPRMVDVSSFQEMESDKKFALTKTVPCAEQDDNSGNRYLPGFPMKIDIPSLLHMEPNIRYSATKTASLIFNALPASFGMKIRGLLDRKGSWKRLDDIRNIFWCHKTFTSEYVTEHWCEDSFFGYQYLNGVNPVMLHCLSSLPSKLPVTNDMVAPLLGPGTCLQTELERGHIFLADYWILAEAPVHCINGLQQYVTAPLCLLWLNPQGVLLPLAIQLSQTPGPESPIFLPTDCELDWLLAKTWVRNSEFLVHENNTHFLCTHLLCEAFSMATLRQLPLCHPVYKLLLPHTRYTLQVNTIARATLLNPDGLVDKVTSIGRQGLIYLMSTGLAHFTYTDFCLPDSIRARGVLTIPNYHYRDDGLKIWAAIERFVSEIVSYYYPSDASVQQDCELQAWVGEIFAQAFLGRESSGFPSRLCTPGELVKYLTAIIFNCSAQHAAVNSGQHDFGAWMPNAPSSMRQPPPQTKGDTTMKSYLDTLPEVNTTCRNLLLFWLVSQEPKDQRPLGTYPDEHFTEEAPRQSIAAFQNCLAQISKDIRERNQSLALPYAYLDPPLIENSVSI.

One can recognise a PLAT domain in the interval 2–119; it reads AVYRLCVTTG…TVELRPGTAR (118 aa). The 592-residue stretch at 120–711 folds into the Lipoxygenase domain; it reads TICQDSLPLL…PPLIENSVSI (592 aa). Fe cation-binding residues include His408, His413, His588, Asn592, and Ile711.

This sequence belongs to the lipoxygenase family. Fe cation serves as cofactor. As to expression, skin specific.

Its subcellular location is the cytoplasm. It carries out the reaction a hydroperoxyeicosatetraenoate = a hydroxy-epoxy-eicosatetraenoate. The enzyme catalyses (8S)-hydroperoxy-(5Z,9E,11Z,14Z)-eicosatetraenoate = (10R)-hydroxy-(8S,9S)-epoxy-(5Z,11Z,14Z)-eicosatrienoate. It catalyses the reaction (12R)-hydroperoxy-(5Z,8Z,10E,14Z)-eicosatetraenoate = (8R)-hydroxy-(11R,12R)-epoxy-(5Z,9E,14Z)-eicosatrienoate. The catalysed reaction is (12S)-hydroperoxy-(5Z,8Z,10E,14Z)-eicosatetraenoate = (8R)-hydroxy-(11S,12S)-epoxy-(5Z,9E,14Z)-eicosatrienoate. It carries out the reaction (12S)-hydroperoxy-(5Z,8Z,10E,14Z)-eicosatetraenoate = (10R)-hydroxy-(11S,12S)-epoxy-(5Z,8Z,14Z)-eicosatrienoate. The enzyme catalyses (15S)-hydroperoxy-(5Z,8Z,11Z,13E)-eicosatetraenoate = (13R)-hydroxy-(14S,15S)-epoxy-(5Z,8Z,11Z)-eicosatrienoate. It catalyses the reaction (13S)-hydroperoxy-(9Z,11E)-octadecadienoate = 11-hydroxy-(12S,13S)-epoxy-(9Z)-octadecenoate. The catalysed reaction is (5S)-hydroperoxy-(6E,8Z,11Z,14Z)-eicosatetraenoate = 7R-hydroxy-5S,6S-epoxy-(8Z,11Z,14Z)-eicosatrienoate. It carries out the reaction N-[omega-(9R)-hydroperoxy-(10E,12Z)-octadecadienoyloxy]acyl-beta-D-glucosyl-(1&lt;-&gt;1)-octadecasphing-4E-enine = a N-[omega-(9R,10R)-epoxy-(13R)-hydroxy-(11E)-octadecenoyloxy]acyl-beta-D-glucosyl-(1&lt;-&gt;1)-sphing-4E-enine. The enzyme catalyses a N-[omega-(9R)-hydroperoxy-(10E,12Z)-octadecadienoyloxy]-acylsphin-4E-enine = a N-[omega-(9R,10R)-epoxy-(13R)-hydroxy-(11E)-octadecenoyloxy]-acylsphing-4E-enine. It catalyses the reaction a hydroperoxyeicosatetraenoate = an oxoeicosatetraenoate + H2O. The catalysed reaction is (8R)-hydroperoxy-(5Z,9E,11Z,14Z)-eicosatetraenoate = 8-oxo-(5Z,9E,11Z,14Z)-eicosatetraenoate + H2O. It carries out the reaction (8S)-hydroperoxy-(5Z,9E,11Z,14Z)-eicosatetraenoate = 8-oxo-(5Z,9E,11Z,14Z)-eicosatetraenoate + H2O. The enzyme catalyses (12R)-hydroperoxy-(5Z,8Z,10E,14Z)-eicosatetraenoate = 12-oxo-(5Z,8Z,10E,14Z)-eicosatetraenoate + H2O. It catalyses the reaction (12S)-hydroperoxy-(5Z,8Z,10E,14Z)-eicosatetraenoate = 12-oxo-(5Z,8Z,10E,14Z)-eicosatetraenoate + H2O. The catalysed reaction is (15S)-hydroperoxy-(5Z,8Z,11Z,13E)-eicosatetraenoate = 15-oxo-(5Z,8Z,11Z,13E)-eicosatetraenoate + H2O. It carries out the reaction (13S)-hydroperoxy-(9Z,11E)-octadecadienoate = 13-oxo-(9Z,11E)-octadecadienoate + H2O. The protein operates within lipid metabolism; hydroperoxy eicosatetraenoic acid biosynthesis. Its pathway is lipid metabolism; sphingolipid metabolism. In terms of biological role, non-heme iron-containing lipoxygenase which is atypical in that it displays a prominent hydroperoxide isomerase activity and a reduced lipoxygenases activity. The hydroperoxide isomerase activity catalyzes the isomerization of hydroperoxides, derived from arachidonic and linoleic acid by ALOX12B, into hepoxilin-type epoxyalcohols and ketones. In presence of oxygen, oxygenates polyunsaturated fatty acids, including arachidonic acid, to produce fatty acid hydroperoxides. In the skin, acts downstream of ALOX12B on the linoleate moiety of esterified omega-hydroxyacyl-sphingosine (EOS) ceramides to produce an epoxy-ketone derivative, a crucial step in the conjugation of omega-hydroxyceramide to membrane proteins. Therefore plays a crucial role in the synthesis of corneocytes lipid envelope and the establishment of the skin barrier to water loss. In parallel, it may have a signaling function in barrier formation through the production of hepoxilins metabolites. Also plays a role in adipocyte differentiation through hepoxilin A3 and hepoxilin B3 production which in turn activate PPARG. Through the production of hepoxilins in the spinal cord, it may regulate inflammatory tactile allodynia. The polypeptide is Hydroperoxide isomerase ALOXE3 (Mus musculus (Mouse)).